Here is a 325-residue protein sequence, read N- to C-terminus: Putative HTH-type transcriptional regulatory protein MK1005 (325 aa).

The region spanning 128-190 (VDELDVSRVR…FERRVAELLE (63 aa)) is the HTH cro/C1-type domain. Positions 139-158 (RQLRREGGRITLARAEEADV) form a DNA-binding region, H-T-H motif.

This chain is Putative HTH-type transcriptional regulatory protein MK1005, found in Methanopyrus kandleri (strain AV19 / DSM 6324 / JCM 9639 / NBRC 100938).